The following is a 384-amino-acid chain: MKALHFGAGNIGRGFIGYLLYKSNYETTFVDIFDKVVDDINKYKRYTVITLSTSKNKEKVENVRAVNLKDSVALEKEVLEADLITTSLGLNNLKSTGELLRGFLKKRSEINDKPLDIIACENALFASDVLKKAILDGADEELKKYLEKSVGFPNCTVDRIVPNVDIEKELPIDVAVEDFYEWDIEKNKVKINNKIIGAEYVEKLDPYLERKLFLLNGAHATIAYLGYLKGYKYIHEAIKDKEINKIIVGFHSEAVQALSEKHKIDIQILKEYSNKLLKRFENEYLKDDVSRVGRDPMRKLSSNDRLITPLKLCCDLKIDFTNILFGVASGYLFNYKEDEKAQGIQNIITKEGIKKAISNVSQIKEGDYLNNMIAYKYEELKKQN.

3–14 (ALHFGAGNIGRG) contributes to the NAD(+) binding site.

It belongs to the mannitol dehydrogenase family.

It catalyses the reaction D-mannitol 1-phosphate + NAD(+) = beta-D-fructose 6-phosphate + NADH + H(+). The chain is Mannitol-1-phosphate 5-dehydrogenase (mtlD) from Clostridium acetobutylicum (strain ATCC 824 / DSM 792 / JCM 1419 / IAM 19013 / LMG 5710 / NBRC 13948 / NRRL B-527 / VKM B-1787 / 2291 / W).